A 1492-amino-acid polypeptide reads, in one-letter code: Collagen alpha-1(II) chain (1492 aa).

The first 26 residues, 1 to 26 (MFSFVDSRTLVLFAATQVILLAVVRC), serve as a signal peptide directing secretion. The propeptide at 27 to 186 (QDEEDVLATG…PPGLGGNFAA (160 aa)) is N-terminal propeptide. The 59-residue stretch at 36 to 94 (GSCVQHGQRYSDKDVWKPEPCQICVCDTGNVLCDEIICEDPKDCPNAEIPFGECCPICP) folds into the VWFC domain. Residues 98–1255 (SSTSSGQGVL…ADQASSSVPQ (1158 aa)) are disordered. Composition is skewed to basic and acidic residues over residues 110 to 121 (QKGEPGDIKDVV) and 138 to 159 (PRGDRGDKGEKGAPGPRGRDGE). Positions 163-178 (PGNPGPVGPPGPPGPP) are enriched in pro residues. The segment covering 197–208 (GGAQMGVMQGPM) has biased composition (low complexity). Residues 206–1219 (GPMGPMGPRG…PGPPGPPGPP (1014 aa)) form a triple-helical region region. Residues 213-222 (PRGPPGPTGA) show a composition bias toward pro residues. Residues 223–234 (PGPQGFQGNPGE) are compositionally biased toward low complexity. The span at 236–245 (GEPGAGGPMG) shows a compositional bias: gly residues. The span at 256-270 (PGDDGEAGKPGKSGE) shows a compositional bias: basic and acidic residues. The span at 311 to 320 (GAKGEGGATG) shows a compositional bias: gly residues. Composition is skewed to low complexity over residues 321–333 (EAGSPGPMGPRGL), 340–355 (PGASGAAGARGNDGLP), 366–376 (PAGAPGFPGAP), and 396–436 (PRGE…AGAP). The span at 438-447 (FPGPRGPPGP) shows a compositional bias: pro residues. Low complexity-rich tracts occupy residues 480–490 (SAGPQGAPGPA) and 501–517 (EPGAAGPLGPPGERGAP). Over residues 539 to 548 (GVPGLGGPKG) the composition is skewed to gly residues. Low complexity-rich tracts occupy residues 627 to 636 (LLGAPGLRGL) and 645 to 655 (AQGPNGPAGPA). 4-hydroxyproline is present on residues Pro-664 and Pro-673. Residue Pro-675 is modified to 3-hydroxyproline. Residues Pro-676 and Pro-679 each carry the 4-hydroxyproline modification. Over residues 711-741 (ERGSSGPQGLQGPRGLPGTPGTDGPKGATGP) the composition is skewed to low complexity. Positions 769-780 (KGDRGDTGEKGP) are enriched in basic and acidic residues. Low complexity-rich tracts occupy residues 838-850 (AGFAGPPGADGQA) and 894-910 (AQGPPGATGFPGAAGRV). Residue Pro-912 is modified to 3-hydroxyproline. Pro-913, Pro-919, and Pro-925 each carry 4-hydroxyproline. The segment covering 919 to 930 (PGPSGAPGSAGK) has biased composition (low complexity). Residues 1010-1019 (GKQGGPGSAG) are compositionally biased toward gly residues. Positions 1105 to 1114 (SGPAGARGLP) are enriched in low complexity. A compositionally biased stretch (basic and acidic residues) spans 1120-1134 (RGDKGEAGEAGERGQ). Composition is skewed to low complexity over residues 1140-1159 (FTGLQGLPGPPGTAGDQGAS) and 1176-1186 (PSGKDGSNGLP). Pro-1149 is modified (3-hydroxyproline). Pro-1186 is subject to 4-hydroxyproline. Residue Pro-1191 is modified to 3-hydroxyproline. Residue Pro-1192 is modified to 4-hydroxyproline. Positions 1204-1221 (AGPPGQPGPPGPPGPPGP) are enriched in pro residues. Pro-1206 is subject to 3-hydroxyproline. 2 positions are modified to 4-hydroxyproline: Pro-1207 and Pro-1210. Pro-1212 carries the 3-hydroxyproline modification. Pro-1213 and Pro-1216 each carry 4-hydroxyproline. 3-hydroxyproline is present on Pro-1218. Pro-1219 carries the post-translational modification 4-hydroxyproline. Residues 1220–1246 (GPGIDMSAFAGLSQPEKGPDPMRYMRA) form a nonhelical region (C-terminal) region. A compositionally biased stretch (basic and acidic residues) spans 1236–1245 (KGPDPMRYMR). Residues 1247–1492 (DQASSSVPQR…GVDIGPVCFL (246 aa)) constitute a propeptide, C-terminal propeptide. One can recognise a Fibrillar collagen NC1 domain in the interval 1258–1492 (VDVEATLKSL…GVDIGPVCFL (235 aa)). Cystine bridges form between Cys-1288/Cys-1320, Cys-1328/Cys-1490, and Cys-1398/Cys-1443. Ca(2+) contacts are provided by Asp-1306, Asn-1308, Gln-1309, Cys-1311, and Asp-1314. Asn-1393 carries N-linked (GlcNAc...) asparagine glycosylation.

It belongs to the fibrillar collagen family. Homotrimers of alpha 1(II) chains. Post-translationally, contains mostly 4-hydroxyproline. Prolines at the third position of the tripeptide repeating unit (G-X-P) are 4-hydroxylated in some or all of the chains. Contains 3-hydroxyproline at a few sites. This modification occurs on the first proline residue in the sequence motif Gly-Pro-Hyp, where Hyp is 4-hydroxyproline. In terms of processing, lysine residues at the third position of the tripeptide repeating unit (G-X-Y) are 5-hydroxylated in some or all of the chains. Post-translationally, O-glycosylated on hydroxylated lysine residues. The O-linked glycan consists of a Glc-Gal disaccharide.

Its subcellular location is the secreted. It is found in the extracellular space. The protein resides in the extracellular matrix. Functionally, type II collagen is specific for cartilaginous tissues. It is essential for the normal embryonic development of the skeleton, for linear growth and for the ability of cartilage to resist compressive forces. The sequence is that of Collagen alpha-1(II) chain from Xenopus tropicalis (Western clawed frog).